Here is a 119-residue protein sequence, read N- to C-terminus: Protein TusC (119 aa).

Belongs to the DsrF/TusC family. In terms of assembly, heterohexamer, formed by a dimer of trimers. The hexameric TusBCD complex contains 2 copies each of TusB, TusC and TusD. The TusBCD complex interacts with TusE.

It is found in the cytoplasm. Part of a sulfur-relay system required for 2-thiolation of 5-methylaminomethyl-2-thiouridine (mnm(5)s(2)U) at tRNA wobble positions. This is Protein TusC from Shigella sonnei (strain Ss046).